The chain runs to 317 residues: Spore protein CgeB (317 aa).

Its function is as follows. May be involved in maturation of the outermost layer of the spore. May act as a glycosyltransferase that contributes to the glycosylation state of the spore. This Bacillus subtilis (strain 168) protein is Spore protein CgeB.